Here is an 876-residue protein sequence, read N- to C-terminus: SED5-binding protein 2 (876 aa).

Residue Ser51 is modified to Phosphoserine. A zinc finger-like region spans residues 164-189; it reads CRRCRSYMNPFVVFINQGRKWQCNIC. The span at 300 to 324 shows a compositional bias: acidic residues; that stretch reads VSDEDDEESDGEEEDEDEEEEDVDN. The tract at residues 300–326 is disordered; it reads VSDEDDEESDGEEEDEDEEEEDVDNSE.

This sequence belongs to the SEC23/SEC24 family. SEC24 subfamily. COPII is composed of at least five proteins: the SEC23/24 complex, the SEC13/31 complex and SAR1. Interacts with GRH1.

It localises to the cytoplasm. It is found in the golgi apparatus membrane. The protein resides in the endoplasmic reticulum membrane. Component of the COPII coat, that covers ER-derived vesicles involved in transport from the endoplasmic reticulum to the Golgi apparatus. COPII acts in the cytoplasm to promote the transport of secretory, plasma membrane, and vacuolar proteins from the endoplasmic reticulum to the Golgi complex. The polypeptide is SED5-binding protein 2 (SFB2) (Saccharomyces cerevisiae (strain ATCC 204508 / S288c) (Baker's yeast)).